We begin with the raw amino-acid sequence, 169 residues long: 16S rRNA aminocarboxypropyltransferase (169 aa).

S-adenosyl-L-methionine-binding residues include Thr15, Val65, Leu88, and Thr107.

It belongs to the TDD superfamily. TSR3 family.

The protein resides in the cytoplasm. It carries out the reaction an N(1)-methylpseudouridine in rRNA + S-adenosyl-L-methionine = N(1)-methyl-N(3)-[(3S)-3-amino-3-carboxypropyl]pseudouridine in rRNA + S-methyl-5'-thioadenosine + H(+). In terms of biological role, aminocarboxypropyltransferase that catalyzes the aminocarboxypropyl transfer on pseudouridine corresponding to position 914 in M.jannaschii 16S rRNA. It constitutes the last step in biosynthesis of the hypermodified N1-methyl-N3-(3-amino-3-carboxypropyl) pseudouridine (m1acp3-Psi). This is 16S rRNA aminocarboxypropyltransferase from Methanopyrus kandleri (strain AV19 / DSM 6324 / JCM 9639 / NBRC 100938).